A 49-amino-acid polypeptide reads, in one-letter code: uncharacterized protein (49 aa).

A signal peptide spans 1–22 (MIQKPILLSSFLFLYIRALLHS).

This is an uncharacterized protein from Saccharomyces cerevisiae (strain ATCC 204508 / S288c) (Baker's yeast).